The following is a 314-amino-acid chain: ATP synthase gamma chain (314 aa).

The protein belongs to the ATPase gamma chain family. As to quaternary structure, F-type ATPases have 2 components, CF(1) - the catalytic core - and CF(0) - the membrane proton channel. CF(1) has five subunits: alpha(3), beta(3), gamma(1), delta(1), epsilon(1). CF(0) has three main subunits: a, b and c.

The protein resides in the cell inner membrane. Produces ATP from ADP in the presence of a proton gradient across the membrane. The gamma chain is believed to be important in regulating ATPase activity and the flow of protons through the CF(0) complex. This chain is ATP synthase gamma chain, found in Gloeobacter violaceus (strain ATCC 29082 / PCC 7421).